We begin with the raw amino-acid sequence, 200 residues long: Pyrrolidone-carboxylate peptidase (200 aa).

Catalysis depends on residues Glu-79, Cys-142, and His-166.

It belongs to the peptidase C15 family. In terms of assembly, homotetramer.

The protein resides in the cytoplasm. It carries out the reaction Release of an N-terminal pyroglutamyl group from a polypeptide, the second amino acid generally not being Pro.. In terms of biological role, removes 5-oxoproline from various penultimate amino acid residues except L-proline. The polypeptide is Pyrrolidone-carboxylate peptidase (pcp) (Pyrococcus abyssi (strain GE5 / Orsay)).